The primary structure comprises 101 residues: Phosphoribosyl-AMP cyclohydrolase (101 aa).

Position 71 (aspartate 71) interacts with Mg(2+). Cysteine 72 is a Zn(2+) binding site. Positions 73 and 75 each coordinate Mg(2+). Positions 88 and 95 each coordinate Zn(2+).

It belongs to the PRA-CH family. Homodimer. It depends on Mg(2+) as a cofactor. Zn(2+) serves as cofactor.

It localises to the cytoplasm. The catalysed reaction is 1-(5-phospho-beta-D-ribosyl)-5'-AMP + H2O = 1-(5-phospho-beta-D-ribosyl)-5-[(5-phospho-beta-D-ribosylamino)methylideneamino]imidazole-4-carboxamide. It functions in the pathway amino-acid biosynthesis; L-histidine biosynthesis; L-histidine from 5-phospho-alpha-D-ribose 1-diphosphate: step 3/9. Catalyzes the hydrolysis of the adenine ring of phosphoribosyl-AMP. This Bacillus cereus (strain Q1) protein is Phosphoribosyl-AMP cyclohydrolase.